A 194-amino-acid polypeptide reads, in one-letter code: Inosine triphosphate pyrophosphatase (194 aa).

Position 10–15 (10–15 (TTNLKK)) interacts with ITP. Residue Glu36 coordinates Mg(2+). ITP contacts are provided by residues Lys48, 66-67 (DT), Lys83, Lys166, and 171-172 (HR).

It belongs to the HAM1 NTPase family. In terms of assembly, homodimer. Mg(2+) serves as cofactor. Mn(2+) is required as a cofactor.

The protein localises to the cytoplasm. Its subcellular location is the nucleus. The catalysed reaction is ITP + H2O = IMP + diphosphate + H(+). It carries out the reaction dITP + H2O = dIMP + diphosphate + H(+). The enzyme catalyses XTP + H2O = XMP + diphosphate + H(+). In terms of biological role, pyrophosphatase that hydrolyzes non-canonical purine nucleotides such as inosine triphosphate (ITP), deoxyinosine triphosphate (dITP) or xanthosine 5'-triphosphate (XTP) to their respective monophosphate derivatives. The enzyme does not distinguish between the deoxy- and ribose forms. Probably excludes non-canonical purines from RNA and DNA precursor pools, thus preventing their incorporation into RNA and DNA and avoiding chromosomal lesions. This Encephalitozoon intestinalis (strain ATCC 50506) (Microsporidian parasite) protein is Inosine triphosphate pyrophosphatase.